The primary structure comprises 655 residues: Epithelial sodium channel subunit gamma (655 aa).

Residues 1–55 (MAPGEKIKAKIKKNLPVRGPQAPTIKDLMHWYCLNTNTHGCRRIVVSRGRLRRLL) lie on the Cytoplasmic side of the membrane. Residues 56-76 (WIAFTLTAVALIIWQCALLVF) traverse the membrane as a helical segment. Topologically, residues 77–547 (SFYTVSVSIK…GGQLGLWMSC (471 aa)) are extracellular. Cystine bridges form between Cys-100–Cys-289, Cys-213–Cys-220, Cys-266–Cys-273, Cys-378–Cys-463, Cys-400–Cys-459, Cys-404–Cys-455, Cys-413–Cys-440, and Cys-415–Cys-429. The interval 140–227 (RKRREAGSMR…SDCATYTFSS (88 aa)) is gating release of inhibition by proteolysis (GRIP); protease-sensitive region that is responsible for the proteolytic activation of the channel. A glycan (N-linked (GlcNAc...) asparagine) is linked at Asn-215. Asn-277 carries N-linked (GlcNAc...) asparagine glycosylation. The N-linked (GlcNAc...) asparagine glycan is linked to Asn-503. A helical transmembrane segment spans residues 548–568 (SVVCVIEIIEVFFIDFFSIIA). Topologically, residues 569-655 (RRQWQKAKDW…LTDTQLTNEF (87 aa)) are cytoplasmic. The disordered stretch occupies residues 582 to 636 (RRTPPSTETPSSQQGQDNPALDTDDDLPTFTSAMRLPPAPEAPVPGTPPPRYNTL). Polar residues predominate over residues 585–598 (PPSTETPSSQQGQD). A compositionally biased stretch (pro residues) spans 618 to 632 (PPAPEAPVPGTPPPR). The short motif at 629–633 (PPPRY) is the PY motif; recruits WW domain-containing proteins and is thereby required for ubiquitination and inhibition of the channel by NEDD4 and NEDD4L element.

This sequence belongs to the amiloride-sensitive sodium channel (TC 1.A.6) family. SCNN1G subfamily. In terms of assembly, component of the heterotrimeric epithelial sodium channel (ENaC) composed of an alpha/SCNN1A, a beta/SCNN1B and a gamma/SCNN1G subunit. Interacts with WWP1 (via WW domains). Interacts with WWP2 (via WW domains); inhibits the channel. Interacts with the full-length immature form of PCSK9 (pro-PCSK9); inhibits ENaC by promoting its proteasomal degradation. Interacts with BPIFA1; the interaction is indirect via SCNN1B and inhibits the proteolytic maturation of SCNN1A and SCNN1G and the activation of ENaC. In terms of processing, phosphorylated on serine and threonine residues. Aldosterone and insulin increase the basal level of phosphorylation. Ubiquitinated. Can be ubiquitinated at multiple sites and undergo monoubiquitination and polyubiquitination. Ubiquitination by NEDD4 or NEDD4L inhibits the ENaC channel through endocytosis, intracellular retention and degradation of its individual subunits. Post-translationally, ENaC is activated through the proteolytic maturation of its subunits. Furin cleaves the SCNN1G subunit first, followed by cleavage by prostasin (PRSS8), which results in a stepwise increase in the open probability of the channel due to the release of an inhibitory tract. BPIFA1, which is recruited by the SCNN1B subunit, prevents the proteolytic activation of ENaC. In terms of processing, N-glycosylated. N-linked glycans are processed to complex type during ENaC complex assembly and transport to the plasma membrane. As to expression, lung and kidney.

The protein resides in the apical cell membrane. The catalysed reaction is Na(+)(in) = Na(+)(out). Its activity is regulated as follows. Originally identified and characterized by its inhibition by the diuretic drug amiloride. Functionally, this is one of the three pore-forming subunits of the heterotrimeric epithelial sodium channel (ENaC), a critical regulator of sodium balance and fluid homeostasis. ENaC operates in epithelial tissues, where it mediates the electrodiffusion of sodium ions from extracellular fluid through the apical membrane of cells, with water following osmotically. It plays a key role in maintaining sodium homeostasis through electrogenic sodium reabsorption in the kidneys. Additionally, ENaC is essential for airway surface liquid homeostasis, which is crucial for proper mucus clearance. In Mus musculus (Mouse), this protein is Epithelial sodium channel subunit gamma.